The primary structure comprises 396 residues: MSVAFASARPRGKGEVTQQTIQKMLDENHHLIQCILEYQSKGKTAECTQYQQILHRNLVYLATIADSNQNMQSLLPAPPTQNMNLGPGALTQSGSSQGLHSQGSLSDAISTGLPPSSLLQGQIGNGPSHVSMQQTAPNTLPTTSMSISGPGYSHAGPASQGVPMQGQGTIGNYVSRTNINMQSNPVSMMQQQAATSHYSSAQGGSQHYQGQSSIAMMGQGSQGSSMMGQRPMAPYRPSQQGSSQQYLGQEEYYGEQYSHSQGAAEPMGQQYYPDGHGDYAYQQSSYTEQSYDRSFEESTQHYYEGGNSQYSQQQAGYQQGAAQQQTYSQQQYPSQQSYPGQQQGYGSAQGAPSQYPGYQQGQGQQYGSYRAPQTAPSAQQQRPYGYEQGQYGNYQQ.

The interval 1–148 (MSVAFASARP…TLPTTSMSIS (148 aa)) is N-terminal auto-inhibitory domain; necessary for interaction with SMARCA4/BRG1. Residues 50-53 (YQQI) carry the SH2-binding motif. Disordered stretches follow at residues 72-162 (QSLL…SQGV), 192-280 (QAAT…GDYA), and 311-396 (SQQQ…NYQQ). Low complexity predominate over residues 90–106 (LTQSGSSQGLHSQGSLS). 2 stretches are compositionally biased toward polar residues: residues 107–122 (DAIS…LQGQ) and 128–147 (SHVS…SMSI). The segment at 149-232 (GPGYSHAGPA…GSSMMGQRPM (84 aa)) is methionine-rich intra-molecular domain. 3 stretches are compositionally biased toward low complexity: residues 199–229 (SSAQ…MMGQ), 238–261 (SQQG…SHSQ), and 311–369 (SQQQ…YGSY). The tract at residues 246–317 (YLGQEEYYGE…SQYSQQQAGY (72 aa)) is MFD domain. The tract at residues 334–396 (SQQSYPGQQQ…EQGQYGNYQQ (63 aa)) is necessary for nuclear localization. Residues 353 to 356 (SQYP) carry the SH2-binding motif. The SH3-binding motif lies at 371–379 (APQTAPSAQ). Residues 384-396 (YGYEQGQYGNYQQ) show a composition bias toward low complexity. The tract at residues 387–396 (EQGQYGNYQQ) is necessary for interaction with CREBBP and for the recruitment of CREBBP to the nuclear bodies. The short motif at 391-394 (YGNY) is the SH2-binding element.

Belongs to the SS18 family. In terms of assembly, homodimer. Dimerization may be necessary for its function in neuronal dendritic development. Interacts (via C-terminus) with CREBBP (via N-terminus), EP300 and SMARCA4/BRG1. Interacts with the nBAF complex. Association with CREBBP facilitates transcription while the association with SMARCA4/BRG1 suppresses CREST-mediated transcription in resting neurons. As to expression, ubiquitous; with lowest levels in spleen.

It is found in the nucleus. The protein localises to the chromosome. Its subcellular location is the centromere. It localises to the kinetochore. Transcriptional activator which is required for calcium-dependent dendritic growth and branching in cortical neurons. Recruits CREB-binding protein (CREBBP) to nuclear bodies. Component of the CREST-BRG1 complex, a multiprotein complex that regulates promoter activation by orchestrating a calcium-dependent release of a repressor complex and a recruitment of an activator complex. In resting neurons, transcription of the c-FOS promoter is inhibited by BRG1-dependent recruitment of a phospho-RB1-HDAC1 repressor complex. Upon calcium influx, RB1 is dephosphorylated by calcineurin, which leads to release of the repressor complex. At the same time, there is increased recruitment of CREBBP to the promoter by a CREST-dependent mechanism, which leads to transcriptional activation. The CREST-BRG1 complex also binds to the NR2B promoter, and activity-dependent induction of NR2B expression involves a release of HDAC1 and recruitment of CREBBP. In Homo sapiens (Human), this protein is Calcium-responsive transactivator (SS18L1).